The following is a 177-amino-acid chain: O-acetyl-ADP-ribose deacetylase (177 aa).

Residues 1–175 (MKTRIHVVQG…LYERLLTQQG (175 aa)) enclose the Macro domain. Substrate-binding positions include 11-12 (DI), asparagine 25, 33-35 (GVD), and 122-126 (STGVY). Residue aspartate 35 is the Proton acceptor of the active site.

The protein belongs to the MacroD-type family. YmdB subfamily. As to quaternary structure, homodimer. Interacts with RNase III.

It carries out the reaction 3''-O-acetyl-ADP-D-ribose + H2O = ADP-D-ribose + acetate + H(+). It catalyses the reaction 2''-O-acetyl-ADP-D-ribose + H2O = ADP-D-ribose + acetate + H(+). Functionally, deacetylates O-acetyl-ADP ribose to yield ADP-ribose and free acetate. Down-regulates ribonuclease 3 (RNase III) activity. Acts by interacting directly with the region of the ribonuclease that is required for dimerization/activation. This is O-acetyl-ADP-ribose deacetylase from Escherichia coli O157:H7.